The sequence spans 95 residues: Putative pterin-4-alpha-carbinolamine dehydratase (95 aa).

This sequence belongs to the pterin-4-alpha-carbinolamine dehydratase family.

It carries out the reaction (4aS,6R)-4a-hydroxy-L-erythro-5,6,7,8-tetrahydrobiopterin = (6R)-L-erythro-6,7-dihydrobiopterin + H2O. This is Putative pterin-4-alpha-carbinolamine dehydratase from Prochlorococcus marinus (strain NATL2A).